Reading from the N-terminus, the 379-residue chain is Fimbrium subunit Fim1C (379 aa).

The signal sequence occupies residues 1–17 (MEVKSLLMVMATLTIAG). C18 carries N-palmitoyl cysteine lipidation. The S-diacylglycerol cysteine moiety is linked to residue C18. A propeptide spanning residues 18–45 (CSQNEMTEMNPDTNRTIGLDVYTEVQTR) is cleaved from the precursor.

The protein belongs to the bacteroidetes fimbrillin superfamily. Mfa-like family. May be part of the fimbrial tip.

The protein resides in the fimbrium. Its subcellular location is the cell outer membrane. Its function is as follows. Probably a component of the fimbrium tip. Fimbriae are filamentous appendages on the cell surface that mediate cell adhesion and biofilm formation. The sequence is that of Fimbrium subunit Fim1C (fim1C) from Phocaeicola vulgatus (strain ATCC 8482 / DSM 1447 / JCM 5826 / CCUG 4940 / NBRC 14291 / NCTC 11154) (Bacteroides vulgatus).